The primary structure comprises 539 residues: O-phosphoserine--tRNA(Cys) ligase (539 aa).

Substrate-binding positions include 188–190 (HMT), 233–235 (SAS), 275–276 (YY), and Asn-319.

Belongs to the class-II aminoacyl-tRNA synthetase family. O-phosphoseryl-tRNA(Cys) synthetase subfamily. As to quaternary structure, homotetramer. Interacts with SepCysS.

The enzyme catalyses tRNA(Cys) + O-phospho-L-serine + ATP = O-phospho-L-seryl-tRNA(Cys) + AMP + diphosphate. In terms of biological role, catalyzes the attachment of O-phosphoserine (Sep) to tRNA(Cys). This Methanocaldococcus jannaschii (strain ATCC 43067 / DSM 2661 / JAL-1 / JCM 10045 / NBRC 100440) (Methanococcus jannaschii) protein is O-phosphoserine--tRNA(Cys) ligase (sepS).